The sequence spans 130 residues: MAQVEYRGTGRRKNSVARVRLVPGEGNITVNERDVREYLPFESLILDLNQPFDVTETKGNYDVLVNVHGGGFTGQAQAIRHGIARALLEADPEYRGSLKRAGLLTRDPRMKERKKPGLKKARRSPQFSKR.

The segment at 98–130 is disordered; it reads LKRAGLLTRDPRMKERKKPGLKKARRSPQFSKR. Over residues 111–130 the composition is skewed to basic residues; that stretch reads KERKKPGLKKARRSPQFSKR.

Belongs to the universal ribosomal protein uS9 family.

This chain is Small ribosomal subunit protein uS9, found in Staphylococcus haemolyticus (strain JCSC1435).